The sequence spans 356 residues: S-adenosylmethionine:tRNA ribosyltransferase-isomerase (356 aa).

It belongs to the QueA family. In terms of assembly, monomer.

It localises to the cytoplasm. The catalysed reaction is 7-aminomethyl-7-carbaguanosine(34) in tRNA + S-adenosyl-L-methionine = epoxyqueuosine(34) in tRNA + adenine + L-methionine + 2 H(+). It participates in tRNA modification; tRNA-queuosine biosynthesis. In terms of biological role, transfers and isomerizes the ribose moiety from AdoMet to the 7-aminomethyl group of 7-deazaguanine (preQ1-tRNA) to give epoxyqueuosine (oQ-tRNA). This Escherichia coli O127:H6 (strain E2348/69 / EPEC) protein is S-adenosylmethionine:tRNA ribosyltransferase-isomerase.